Reading from the N-terminus, the 555-residue chain is Glutamine--tRNA ligase (555 aa).

Positions 34 to 44 (PEPNGYLHIGH) match the 'HIGH' region motif. Residues 35–37 (EPN) and 41–47 (HIGHAKS) each bind ATP. 2 residues coordinate L-glutamine: D67 and Y212. Residues T231, 261-262 (RL), and 269-271 (MSK) contribute to the ATP site. The short motif at 268 to 272 (IMSKR) is the 'KMSKS' region element.

The protein belongs to the class-I aminoacyl-tRNA synthetase family. In terms of assembly, monomer.

The protein resides in the cytoplasm. The enzyme catalyses tRNA(Gln) + L-glutamine + ATP = L-glutaminyl-tRNA(Gln) + AMP + diphosphate. In Yersinia pseudotuberculosis serotype O:3 (strain YPIII), this protein is Glutamine--tRNA ligase.